The chain runs to 291 residues: Syntaxin-1A homolog (291 aa).

The interval Met1–Met24 is disordered. Over Met1 to Lys266 the chain is Cytoplasmic. A coiled-coil region spans residues Asn69 to Leu95. The t-SNARE coiled-coil homology domain occupies Leu193–Ala255. Residues Ile267–Tyr287 traverse the membrane as a helical; Anchor for type IV membrane protein segment. Residues Ala288–Leu291 are Extracellular-facing.

This sequence belongs to the syntaxin family. Interacts (via N-terminus, in open or in closed conformation) with unc-18; the interaction is direct. Interaction in open conformation with unc-18 promotes synaptic vesicle docking and tethering. Interaction via N-terminus with unc-18 mediates the secretion of the neurotransmitter acetylcholine from cholinergic motor neurons. Interaction with unc-18 is reduced in the presence of unc-13. As to expression, expressed throughout the head ganglion, nerve ring, ventral cord, dorsal cord, intestine, vulva and spermatheca.

Its subcellular location is the cell membrane. It localises to the cell projection. The protein localises to the axon. It is found in the dendrite. The protein resides in the perikaryon. Its function is as follows. Plays a critical role in several secretory processes, including cuticle secretion and neurotransmitter release, and probably assists in neuronal membrane maturation or the final stages of neuronal differentiation. Plays a role in synaptic vesicle docking and tethering through its association with unc-18. Through binding to unc-18 mediates the release of the neurotransmitter acetylcholine from cholinergic motor neurons, and thereby promotes locomotory behaviors. Essential for embryonic viability and development. Has a role in dauer formation and adult life span. Required for locomotion. Probably by regulating neuronal transmission downstream of lin-3 and receptor lin-23 and phospholipase plc-3 and upstream of innexin unc-7 and egl-4/PKG in ALA neurons, involved in the decrease in pharyngeal pumping during the quiescent state that precedes each larval molt. The chain is Syntaxin-1A homolog from Caenorhabditis elegans.